The chain runs to 1217 residues: Splicing factor 3B subunit 3 (1217 aa).

Interaction with PHF5A, SF3B1 and SF3B5 stretches follow at residues 105–119 (ETFG…VPGQ) and 145–168 (NRDA…TLVY). Residue serine 156 is modified to Phosphoserine. Interaction with SF3B1 and SF3B5 stretches follow at residues 193–231 (DNDP…LEEH) and 786–804 (RKFV…ETDH). The segment at 1028–1049 (TYPRWVTTASLLDYDTVAGADK) is interaction with SF3B1. Residues 1100–1123 (TVLSLQKTTLIPGGSESLVYTTLS) are interaction with SF3B5. Threonine 1200 bears the Phosphothreonine mark.

This sequence belongs to the RSE1 family. As to quaternary structure, component of the 17S U2 SnRNP complex, a ribonucleoprotein complex that contains small nuclear RNA (snRNA) U2 and a number of specific proteins. Part of the SF3B subcomplex of the 17S U2 SnRNP complex. SF3B associates with the splicing subcomplex SF3A and a 12S RNA unit to form the U2 small nuclear ribonucleoproteins complex (U2 snRNP). Within the SF3B subcomplex, interacts directly with SF3B1 (via HEAT domain), SF3B5 and PHF5A. Identified in the spliceosome A complex; remains associated with the spliceosome throughout the splicing process. Component of the spliceosome B complex. Identified in the spliceosome C complex. Identified in the spliceosome E complex. Component of the minor (U12-type spliceosome) spliceosome. Within this complex, interacts with SCNM1. Associates with the STAGA transcription coactivator-HAT complex. Interacts with SUPT3H. Interacts with TAF3.

The protein localises to the nucleus. In terms of biological role, component of the 17S U2 SnRNP complex of the spliceosome, a large ribonucleoprotein complex that removes introns from transcribed pre-mRNAs. The 17S U2 SnRNP complex (1) directly participates in early spliceosome assembly and (2) mediates recognition of the intron branch site during pre-mRNA splicing by promoting the selection of the pre-mRNA branch-site adenosine, the nucleophile for the first step of splicing. Within the 17S U2 SnRNP complex, SF3B3 is part of the SF3B subcomplex, which is required for 'A' complex assembly formed by the stable binding of U2 snRNP to the branchpoint sequence in pre-mRNA. Sequence independent binding of SF3A and SF3B subcomplexes upstream of the branch site is essential, it may anchor U2 snRNP to the pre-mRNA. May also be involved in the assembly of the 'E' complex. Also acts as a component of the minor spliceosome, which is involved in the splicing of U12-type introns in pre-mRNAs. The chain is Splicing factor 3B subunit 3 (SF3B3) from Bos taurus (Bovine).